Reading from the N-terminus, the 207-residue chain is MSKNWQDITLALAGIFQATHLVDQVARTGHLPPDAFKCSIESLLDLNPPDTLAVYGGDAANLRTGLEIMRELLRPSSSKYRETLRYGLGVLHLQKKLAGRRDMLGVIGSRIDQAAQQAETFGSTHDNVIANLGGLYSETISTFRYRIQVNGEYQYLQQTRIANQIRALLLAAIRSAMLWRQVGGNRWQLLFYRKQISWQVEDLLRRM.

Belongs to the HflD family.

It localises to the cytoplasm. Its subcellular location is the cell inner membrane. The chain is High frequency lysogenization protein HflD homolog from Cellvibrio japonicus (strain Ueda107) (Pseudomonas fluorescens subsp. cellulosa).